The chain runs to 328 residues: Malate dehydrogenase (328 aa).

16–22 is a binding site for NAD(+); sequence GAAGQIS. Substrate-binding residues include Arg97 and Arg103. NAD(+) is bound by residues Asn110, Gln117, and 134–136; that span reads VGN. Substrate-binding residues include Asn136 and Arg167. His192 functions as the Proton acceptor in the catalytic mechanism.

The protein belongs to the LDH/MDH superfamily. MDH type 2 family. Homotetramer.

It catalyses the reaction (S)-malate + NAD(+) = oxaloacetate + NADH + H(+). Citrate activates the enzyme in the oxidation of malate to oxaloacetate and inhibits it in the reverse reaction. Its function is as follows. Catalyzes the reversible oxidation of malate to oxaloacetate. Exhibits higher catalytic efficiency for oxaloacetate reduction than for malate oxidation in vitro. Almost equally active both for NADH and NADPH on the bases of the kcat values at pH 6.5, but catalytic efficiency for oxaloacetate reduction is 50-fold higher with NADH. This chain is Malate dehydrogenase, found in Corynebacterium glutamicum (strain ATCC 13032 / DSM 20300 / JCM 1318 / BCRC 11384 / CCUG 27702 / LMG 3730 / NBRC 12168 / NCIMB 10025 / NRRL B-2784 / 534).